Consider the following 129-residue polypeptide: NADH-quinone oxidoreductase subunit A (129 aa).

The next 3 membrane-spanning stretches (helical) occupy residues 9–29 (FPIG…LGLA), 68–88 (LLFI…VLLL), and 97–117 (LGWP…AGLV).

This sequence belongs to the complex I subunit 3 family. As to quaternary structure, NDH-1 is composed of 14 different subunits. Subunits NuoA, H, J, K, L, M, N constitute the membrane sector of the complex.

The protein localises to the cell inner membrane. It carries out the reaction a quinone + NADH + 5 H(+)(in) = a quinol + NAD(+) + 4 H(+)(out). NDH-1 shuttles electrons from NADH, via FMN and iron-sulfur (Fe-S) centers, to quinones in the respiratory chain. The immediate electron acceptor for the enzyme in this species is believed to be ubiquinone. Couples the redox reaction to proton translocation (for every two electrons transferred, four hydrogen ions are translocated across the cytoplasmic membrane), and thus conserves the redox energy in a proton gradient. This is NADH-quinone oxidoreductase subunit A from Anaeromyxobacter sp. (strain K).